The primary structure comprises 205 residues: Small ribosomal subunit protein uS2 (205 aa).

It belongs to the universal ribosomal protein uS2 family.

The sequence is that of Small ribosomal subunit protein uS2 from Methanoculleus marisnigri (strain ATCC 35101 / DSM 1498 / JR1).